The primary structure comprises 93 residues: Small ribosomal subunit protein uS19 (93 aa).

This sequence belongs to the universal ribosomal protein uS19 family.

Functionally, protein S19 forms a complex with S13 that binds strongly to the 16S ribosomal RNA. This Microcystis aeruginosa (strain NIES-843 / IAM M-2473) protein is Small ribosomal subunit protein uS19.